The primary structure comprises 528 residues: U6 snRNA (guanine-N(2))-methyltransferase THUMPD2 (528 aa).

Residues 154–168 (QEVAKDHGESQEDKL) are compositionally biased toward basic and acidic residues. Disordered stretches follow at residues 154–200 (QEVA…ADAQ) and 437–460 (MKTL…RASS). The region spanning 162 to 266 (ESQEDKLLQG…DAYSVVGIPL (105 aa)) is the THUMP domain.

The protein belongs to the methyltransferase superfamily. In terms of assembly, part of the heterodimeric THUMPD2-TRM112 methyltransferase complex; this complex forms an active tRNA methyltransferase, where TRMT112 acts as an activator of the catalytic subunit THUMPD2.

The protein localises to the nucleus. The catalysed reaction is guanosine in U6 snRNA + S-adenosyl-L-methionine = N(2)-methylguanosine in U6 snRNA + S-adenosyl-L-homocysteine + H(+). Its function is as follows. Catalytic subunit of the THUMPD2-TRM112 methyltransferase complex, that specifically mediates the S-adenosyl-L-methionine-dependent N(2)-methylation of guanosine nucleotides, most probably at position 72 (m2G72), in the U6snRNA of the major spliceosome. This modification in the U6 snRNA affects the constitutive splicing efficiency of introns that have suboptimal splice sites and can impact final mRNA levels. This Mus musculus (Mouse) protein is U6 snRNA (guanine-N(2))-methyltransferase THUMPD2.